Here is a 23-residue protein sequence, read N- to C-terminus: SVKSEVDNFDKHLKAESAPFNNE.

The segment covering 1–15 has biased composition (basic and acidic residues); it reads SVKSEVDNFDKHLKA. A disordered region spans residues 1–23; sequence SVKSEVDNFDKHLKAESAPFNNE.

In terms of tissue distribution, expressed in hemolymph.

It localises to the secreted. Constitutes the major component of lipophorin, which mediates transport for various types of lipids in hemolymph. Acts by forming lipoprotein particles that bind lipoproteins and lipids. The protein is Apolipophorin-1 of Galleria mellonella (Greater wax moth).